Reading from the N-terminus, the 102-residue chain is Large ribosomal subunit protein bL21 (102 aa).

Over residues 79-91 (RKDSKRKKGHRQP) the composition is skewed to basic residues. Positions 79–102 (RKDSKRKKGHRQPYTKLTIDKINA) are disordered.

The protein belongs to the bacterial ribosomal protein bL21 family. As to quaternary structure, part of the 50S ribosomal subunit. Contacts protein L20.

In terms of biological role, this protein binds to 23S rRNA in the presence of protein L20. This is Large ribosomal subunit protein bL21 from Staphylococcus saprophyticus subsp. saprophyticus (strain ATCC 15305 / DSM 20229 / NCIMB 8711 / NCTC 7292 / S-41).